Reading from the N-terminus, the 724-residue chain is Catalase-peroxidase (724 aa).

The segment at Met-1–Thr-20 is disordered. Residues Trp-98–Tyr-225 constitute a cross-link (tryptophyl-tyrosyl-methioninium (Trp-Tyr) (with M-251)). Residue His-99 is the Proton acceptor of the active site. The segment at residues Tyr-225 to Met-251 is a cross-link (tryptophyl-tyrosyl-methioninium (Tyr-Met) (with W-98)). His-266 lines the heme b pocket.

This sequence belongs to the peroxidase family. Peroxidase/catalase subfamily. Homodimer or homotetramer. Heme b is required as a cofactor. In terms of processing, formation of the three residue Trp-Tyr-Met cross-link is important for the catalase, but not the peroxidase activity of the enzyme.

It catalyses the reaction H2O2 + AH2 = A + 2 H2O. The enzyme catalyses 2 H2O2 = O2 + 2 H2O. In terms of biological role, bifunctional enzyme with both catalase and broad-spectrum peroxidase activity. This is Catalase-peroxidase from Pectobacterium carotovorum subsp. carotovorum (strain PC1).